The primary structure comprises 268 residues: Tryptophan synthase alpha chain (268 aa).

Active-site proton acceptor residues include Glu-49 and Asp-60.

It belongs to the TrpA family. In terms of assembly, tetramer of two alpha and two beta chains.

It carries out the reaction (1S,2R)-1-C-(indol-3-yl)glycerol 3-phosphate + L-serine = D-glyceraldehyde 3-phosphate + L-tryptophan + H2O. It functions in the pathway amino-acid biosynthesis; L-tryptophan biosynthesis; L-tryptophan from chorismate: step 5/5. Functionally, the alpha subunit is responsible for the aldol cleavage of indoleglycerol phosphate to indole and glyceraldehyde 3-phosphate. The sequence is that of Tryptophan synthase alpha chain from Haemophilus influenzae (strain PittEE).